The chain runs to 90 residues: DNA-directed RNA polymerase subunit omega (90 aa).

It belongs to the RNA polymerase subunit omega family. In terms of assembly, the RNAP catalytic core consists of 2 alpha, 1 beta, 1 beta' and 1 omega subunit. When a sigma factor is associated with the core the holoenzyme is formed, which can initiate transcription.

The catalysed reaction is RNA(n) + a ribonucleoside 5'-triphosphate = RNA(n+1) + diphosphate. Promotes RNA polymerase assembly. Latches the N- and C-terminal regions of the beta' subunit thereby facilitating its interaction with the beta and alpha subunits. This is DNA-directed RNA polymerase subunit omega from Streptomyces griseus subsp. griseus (strain JCM 4626 / CBS 651.72 / NBRC 13350 / KCC S-0626 / ISP 5235).